The sequence spans 346 residues: Protein pelota homolog (346 aa).

This sequence belongs to the eukaryotic release factor 1 family. Pelota subfamily. In terms of assembly, monomer. A divalent metal cation serves as cofactor.

The protein resides in the cytoplasm. In terms of biological role, may function in recognizing stalled ribosomes, interact with stem-loop structures in stalled mRNA molecules, and effect endonucleolytic cleavage of the mRNA. May play a role in the release non-functional ribosomes and degradation of damaged mRNAs. Has endoribonuclease activity. The polypeptide is Protein pelota homolog (Ignicoccus hospitalis (strain KIN4/I / DSM 18386 / JCM 14125)).